The sequence spans 112 residues: uncharacterized protein (112 aa).

It to M.jannaschii MJ1244 and M.thermoautotrophicum MTH1110.

This is an uncharacterized protein from Methanocaldococcus jannaschii (strain ATCC 43067 / DSM 2661 / JAL-1 / JCM 10045 / NBRC 100440) (Methanococcus jannaschii).